Consider the following 469-residue polypeptide: MGFSRSLNRTVGVFVFFILDIVDFLLCFTYKTLDFFFESEWKPCYCCPPPEAKPISAGGNRGGKMIVSERSGDYSKVVSLTRTKIYLDEISDTLYSRPSLLTKLTKLVKCFKKDVVKCCDESKKRSPSTKKTLLTVNSTVVEKLQRTPRWSDCHCTFCTSWLSSSNQSLFVNVQQPTDNKAQENVVFIHGFLSSSTFWTETLFPNFSDSAKSNYRFLAVDLLGYGKSPKPNDSLYTLKEHLEMIERSVISQFRLKTFHLVAHSLGCILALALAVKHPGAIKSLTLLAPPYYSVPKGVQGTQYVMRRLAPKEVWPPMAFGASVASWYEHISRTVSLVLCKNHHLLEFLTRLLTRNRMRTYLIEGFLCHTHNASWHTLHNIIFGSGSKVEAYLDHVRDNVDCEVAVFHGGRDELIPVECSYGVKRKVPRARIHVVPDKDHITIVVGRQKEFARELELIWRRSTTPQLHSIN.

The first 45 residues, 1 to 45 (MGFSRSLNRTVGVFVFFILDIVDFLLCFTYKTLDFFFESEWKPCY), serve as a signal peptide directing secretion. C46 carries N-palmitoyl cysteine lipidation. The AB hydrolase-1 domain occupies 185 to 439 (VVFIHGFLSS…IHVVPDKDHI (255 aa)). H189 is a catalytic residue. The active-site Nucleophile is S263. Active-site charge relay system residues include D410 and H438.

Expressed exclusively in protodermal and epidermal cells of all organs, especially on adaxial sides.

Its subcellular location is the cell membrane. The protein resides in the secreted. It is found in the cell wall. In terms of biological role, controls cuticle development and morphogenesis, by promoting cutin and suberin monomers loading. Involved in the regulation of abscissic acid (ABA) biosynthesis in response to osmotic stress. Plays an important role in osmotic stress and drought resistance. Required to ensure a reduced permeability of aerial tissue, thus preventing transpiration. Regulates lateral root hair development. Its function is as follows. Required for infection by the pathogenic necrotrophic fungus Botrytis cinerea, probably by regulating structural traits of the cuticle. The sequence is that of Probable lysophospholipase BODYGUARD 1 from Arabidopsis thaliana (Mouse-ear cress).